Consider the following 287-residue polypeptide: Bifunctional protein FolD (287 aa).

NADP(+) contacts are provided by residues 160–162 (GRS), Ser-189, and Thr-230.

This sequence belongs to the tetrahydrofolate dehydrogenase/cyclohydrolase family. Homodimer.

The catalysed reaction is (6R)-5,10-methylene-5,6,7,8-tetrahydrofolate + NADP(+) = (6R)-5,10-methenyltetrahydrofolate + NADPH. It carries out the reaction (6R)-5,10-methenyltetrahydrofolate + H2O = (6R)-10-formyltetrahydrofolate + H(+). Its pathway is one-carbon metabolism; tetrahydrofolate interconversion. Its function is as follows. Catalyzes the oxidation of 5,10-methylenetetrahydrofolate to 5,10-methenyltetrahydrofolate and then the hydrolysis of 5,10-methenyltetrahydrofolate to 10-formyltetrahydrofolate. In Chlamydia muridarum (strain MoPn / Nigg), this protein is Bifunctional protein FolD.